An 888-amino-acid chain; its full sequence is Bifunctional lysine-specific demethylase and histidyl-hydroxylase NO66 (888 aa).

Disordered regions lie at residues 83 to 157, 187 to 208, and 261 to 446; these read AAAK…GSFS, SNNSDFDFDSDGDSNDFDDSDA, and NSTS…NKLS. Positions 98–108 are enriched in basic and acidic residues; it reads REKNIAKKQPE. Positions 116–139 are enriched in polar residues; that stretch reads ENVQKQLENGQENNGTLINLSNGK. Acidic residues predominate over residues 192 to 207; sequence FDFDSDGDSNDFDDSD. Basic and acidic residues predominate over residues 273 to 284; it reads VEPRKAAKRNEP. The segment covering 392–403 has biased composition (low complexity); sequence KNKNNDNNNIDT. Residues 404-429 show a composition bias toward basic and acidic residues; that stretch reads NNKKDANNKKDANNNKDINNKKDANN. Positions 430–444 are enriched in low complexity; it reads NKDTNNNKDNNNKNK. One can recognise a JmjC domain in the interval 564 to 709; the sequence is CSIRILNPST…NLLEVLMPSV (146 aa). Residues histidine 610, aspartate 612, and histidine 675 each coordinate Fe cation.

The protein belongs to the ROX family. NO66 subfamily. Requires Fe(2+) as cofactor.

The protein resides in the nucleus. It carries out the reaction N(6),N(6)-dimethyl-L-lysyl(36)-[histone H3] + 2 2-oxoglutarate + 2 O2 = L-lysyl(36)-[histone H3] + 2 formaldehyde + 2 succinate + 2 CO2. Functionally, oxygenase that can act as both a histone lysine demethylase and a ribosomal histidine hydroxylase. Specifically demethylates 'Lys-4' (H3K4me) and 'Lys-36' (H3K36me) of histone H3, thereby playing a central role in histone code. This chain is Bifunctional lysine-specific demethylase and histidyl-hydroxylase NO66, found in Drosophila mojavensis (Fruit fly).